We begin with the raw amino-acid sequence, 121 residues long: Small ribosomal subunit protein uS13 (121 aa).

Positions 91–121 (HRKGLPMRGQRTRTNARTRKGPRKAGVALKK) are disordered.

It belongs to the universal ribosomal protein uS13 family. Part of the 30S ribosomal subunit. Forms a loose heterodimer with protein S19. Forms two bridges to the 50S subunit in the 70S ribosome.

Its function is as follows. Located at the top of the head of the 30S subunit, it contacts several helices of the 16S rRNA. In the 70S ribosome it contacts the 23S rRNA (bridge B1a) and protein L5 of the 50S subunit (bridge B1b), connecting the 2 subunits; these bridges are implicated in subunit movement. Contacts the tRNAs in the A and P-sites. This chain is Small ribosomal subunit protein uS13, found in Cupriavidus necator (strain ATCC 17699 / DSM 428 / KCTC 22496 / NCIMB 10442 / H16 / Stanier 337) (Ralstonia eutropha).